A 517-amino-acid chain; its full sequence is Argininosuccinate lyase, chloroplastic (517 aa).

The N-terminal 45 residues, 1–45 (MGAIDLSFSQSLLFSSSRSNLSSSTHRSVSFLPPGSKSRCLPPLR), are a transit peptide targeting the chloroplast. 2-(N(omega)-L-arginino)succinate-binding residues include Ser79, Asn166, and Thr211. Catalysis depends on His212, which acts as the Proton acceptor. Ser333 serves as the catalytic Proton donor. 2-(N(omega)-L-arginino)succinate is bound by residues Asn341, Tyr373, Gln378, and Lys381.

This sequence belongs to the lyase 1 family. Argininosuccinate lyase subfamily.

Its subcellular location is the plastid. The protein localises to the chloroplast. It carries out the reaction 2-(N(omega)-L-arginino)succinate = fumarate + L-arginine. The protein operates within amino-acid biosynthesis; L-arginine biosynthesis; L-arginine from L-ornithine and carbamoyl phosphate: step 3/3. The chain is Argininosuccinate lyase, chloroplastic from Arabidopsis thaliana (Mouse-ear cress).